A 512-amino-acid chain; its full sequence is Maturase K (512 aa).

The protein belongs to the intron maturase 2 family. MatK subfamily.

The protein localises to the plastid. It is found in the chloroplast. In terms of biological role, usually encoded in the trnK tRNA gene intron. Probably assists in splicing its own and other chloroplast group II introns. This is Maturase K from Acer platanoides (Norway maple).